A 290-amino-acid chain; its full sequence is Poly-beta-1,6-N-acetyl-D-glucosamine N-deacetylase (290 aa).

The N-terminal stretch at 1–28 (MKYRKLIILVLSILIILPVSTLDGHHIA) is a signal peptide. In terms of domain architecture, NodB homology spans 114-290 (RSVWINFDDM…KRWDGFHEKD (177 aa)).

Belongs to the polysaccharide deacetylase family.

It is found in the secreted. Its subcellular location is the cell wall. Catalyzes the N-deacetylation of poly-beta-1,6-N-acetyl-D-glucosamine (PNAG, also referred to as PIA), a biofilm adhesin polysaccharide. N-deacetylation is crucial for attachment of the polysaccharide to the bacterial cell surface; it leads to the introduction of positive charges in the otherwise neutral PIA polymer, allowing electrostatic interactions. The polypeptide is Poly-beta-1,6-N-acetyl-D-glucosamine N-deacetylase (icaB) (Staphylococcus aureus (strain MRSA252)).